Reading from the N-terminus, the 117-residue chain is Multidrug resistance protein EbrB (117 aa).

4 consecutive transmembrane segments (helical) span residues 3–23, 31–51, 59–79, and 81–101; these read GLLY…MLKL, WPIG…SFSL, AYAT…FLLF, and ETIS…VVVL.

Belongs to the drug/metabolite transporter (DMT) superfamily. Small multidrug resistance (SMR) (TC 2.A.7.1) family. EbrA/EbrB subfamily. As to quaternary structure, the efflux pump is composed of EbrA and EbrB.

It is found in the cell membrane. Part of a multidrug efflux pump. Confers resistance to cationic lipophilic dyes such as ethidium bromide, acriflavine, pyronine Y and safranin O. The efflux is probably coupled to an influx of protons. The protein is Multidrug resistance protein EbrB (ebrB) of Bacillus atrophaeus.